The primary structure comprises 105 residues: Large ribosomal subunit protein eL42z/eL42y (105 aa).

The segment at 28 to 57 is disordered; it reads YKKGKDSLAAQGKRRYDRKQSGYGGQTKPV.

This sequence belongs to the eukaryotic ribosomal protein eL42 family.

This is Large ribosomal subunit protein eL42z/eL42y (RPL36AA) from Arabidopsis thaliana (Mouse-ear cress).